The following is a 328-amino-acid chain: Stress response kinase A (328 aa).

Residue Asp201 is the Proton acceptor of the active site. Mg(2+) contacts are provided by Asn206 and Asp217. The active site involves Asp217.

Belongs to the SrkA/RdoA protein kinase family. In terms of assembly, monomer. Mg(2+) is required as a cofactor.

It is found in the cytoplasm. The catalysed reaction is L-seryl-[protein] + ATP = O-phospho-L-seryl-[protein] + ADP + H(+). It carries out the reaction L-threonyl-[protein] + ATP = O-phospho-L-threonyl-[protein] + ADP + H(+). In terms of biological role, a protein kinase that phosphorylates Ser and Thr residues. Probably acts to suppress the effects of stress linked to accumulation of reactive oxygen species. Probably involved in the extracytoplasmic stress response. In Salmonella choleraesuis (strain SC-B67), this protein is Stress response kinase A.